The sequence spans 2718 residues: E3 SUMO-protein ligase RanBP2 (2718 aa).

Residues M1–D100 form a sufficient for interaction with Hsp83 region. The segment at M1 to N200 is sufficient for interaction with piwi. 2 TPR repeats span residues D26 to D58 and A59 to Q94. Disordered regions lie at residues Q796–N816 and E937–V959. Residues G803–N816 show a composition bias toward polar residues. Repeat unit 1 spans residues F808 to G809. The tract at residues F808–G2581 is 27 X 2 AA repeats of F-G. The segment covering H938–Q948 has biased composition (low complexity). Repeat copies occupy residues F1028–G1029, F1035–G1036, and F1104–G1105. Residues Q1181–Q1208 are disordered. The segment covering V1192–Q1208 has biased composition (polar residues). Copy 5 of the repeat occupies F1252 to G1253. 2 disordered regions span residues F1263–I1314 and N1483–A1502. Residues N1284 to T1299 show a composition bias toward polar residues. Residues D1309–S1445 enclose the RanBD1 1 domain. Polar residues predominate over residues N1483–P1493. 4 consecutive repeat copies span residues F1506–G1507, F1539–G1540, F1547–G1548, and F1552–G1553. The region spanning Q1605–N1742 is the RanBD1 2 domain. The interval Q1738 to K1761 is disordered. Residues E1743–I1760 are compositionally biased toward basic and acidic residues. Repeat unit 10 spans residues F1763 to G1764. The segment at K1770–A1799 adopts a RanBP2-type 1 zinc-finger fold. 4 consecutive repeat copies span residues F1826–G1827, F1842–G1843, F1874–G1875, and F1883–G1884. Residues A1890 to D1919 form a RanBP2-type 2 zinc finger. 2 repeat units span residues F1942–G1943 and F1944–G1945. 3 disordered regions span residues F1981–S2021, E2154–V2204, and S2239–G2273. The segment covering E2002–N2016 has biased composition (acidic residues). The RanBD1 3 domain maps to Y2019 to K2151. Positions S2161 to N2175 are enriched in polar residues. Residues S2239–A2257 show a composition bias toward low complexity. A run of 11 repeats spans residues F2260–G2261, F2313–G2314, F2332–G2333, F2352–G2353, F2360–G2361, F2366–G2367, F2393–G2394, F2399–G2400, F2415–G2416, F2421–G2422, and F2580–G2581. The disordered stretch occupies residues A2320 to E2346. In terms of domain architecture, RanBD1 4 spans H2556 to A2699.

Belongs to the RanBP2 E3 ligase family. Part of the nuclear pore complex. Forms a complex with Nxt1, sbr/Nxf1 and RanGAP. Interacts (via TPR repeats) with Hsp83; the interaction is required for the nuclear import of the sesquiterpenoid juvenile hormone receptor Met. Interacts (via N-terminus) with piwi. Expressed in both oocytes and nurse cells (at protein level).

The protein localises to the nucleus. The protein resides in the nuclear pore complex. E3 SUMO-protein ligase. Component of the nuclear pore complex (NPC), a complex required for trafficking across the nuclear envelope. Required for nuclear import of nuclear localization signal (NLS)-containing proteins in an importin alpha/importin beta-dependent manner, but also for the nuclear import of specific proteins such as phosphorylated Mad or the sesquiterpenoid juvenile hormone receptor Met as part of the juvenile hormone signal transduction pathway. Plays a role in nuclear mRNA export by recruiting the mRNA transport complex composed of Nxt1 and sbr/Nxf1 to the NPC. Essential during germline development for transposon silencing and piRNA biogenesis probably by regulating piwi localization to the nucleus. During oogenesis, required to form granules that modulate the biogenesis of annulate lamellae containing nuclear pore complex components. This is E3 SUMO-protein ligase RanBP2 from Drosophila melanogaster (Fruit fly).